Here is a 767-residue protein sequence, read N- to C-terminus: Probable beta-D-xylosidase 7 (767 aa).

Positions 1 to 19 are cleaved as a signal peptide; sequence MAKQLLLLLLLFIVHGVES. A glycan (N-linked (GlcNAc...) asparagine) is linked at N100. Residue D292 is part of the active site. N643 carries an N-linked (GlcNAc...) asparagine glycan.

This sequence belongs to the glycosyl hydrolase 3 family.

Its subcellular location is the secreted. It is found in the extracellular space. It localises to the extracellular matrix. In Arabidopsis thaliana (Mouse-ear cress), this protein is Probable beta-D-xylosidase 7 (BXL7).